Here is a 309-residue protein sequence, read N- to C-terminus: ADP-L-glycero-D-manno-heptose-6-epimerase (309 aa).

Residues 10–11 (FI), 31–32 (DN), Lys38, Lys53, 75–79 (EGACS), and Asn92 contribute to the NADP(+) site. Tyr140 functions as the Proton acceptor in the catalytic mechanism. Residue Lys144 participates in NADP(+) binding. Asn169 provides a ligand contact to substrate. Residues Val170 and Lys178 each contribute to the NADP(+) site. Lys178 functions as the Proton acceptor in the catalytic mechanism. Residues Ser180, His187, 201-204 (FEGS), Arg209, and Tyr272 each bind substrate.

The protein belongs to the NAD(P)-dependent epimerase/dehydratase family. HldD subfamily. As to quaternary structure, homopentamer. It depends on NADP(+) as a cofactor.

The enzyme catalyses ADP-D-glycero-beta-D-manno-heptose = ADP-L-glycero-beta-D-manno-heptose. Its pathway is nucleotide-sugar biosynthesis; ADP-L-glycero-beta-D-manno-heptose biosynthesis; ADP-L-glycero-beta-D-manno-heptose from D-glycero-beta-D-manno-heptose 7-phosphate: step 4/4. Its function is as follows. Catalyzes the interconversion between ADP-D-glycero-beta-D-manno-heptose and ADP-L-glycero-beta-D-manno-heptose via an epimerization at carbon 6 of the heptose. The polypeptide is ADP-L-glycero-D-manno-heptose-6-epimerase (Enterobacter sp. (strain 638)).